A 304-amino-acid polypeptide reads, in one-letter code: Beta-lactamase-like protein str6 (304 aa).

Belongs to the beta-lactamase family.

It functions in the pathway mycotoxin biosynthesis. Functionally, beta-lactamase-like protein; part of the gene cluster that mediates the biosynthesis of strobilurin A, an antifungal polyketide that contains a key beta-methoxyacrylate toxophore that targets the complex III of the mitochondrial electron transport chain. Strobilurin biosynthesis begins with construction of benzoyl CoA by step-wise elimination of ammonia from phenylalanine by the phenylalanine ammonia-lyase str11, oxygenation by str8 and retro-Claisen reaction to form benzoic acid, which is activated to its CoA thiolester benzoyl CoA by the dedicated CoA ligase str10. Benzoyl CoA forms the starter unit for the highly reducing polyketide synthase stpks1 that produces the polyketide prestrobilutin A. The FAD-dependent oxygenase str9 then catalyzes the key oxidative rearrangement responsible for the creation of the beta-methoxyacrylate toxophore. Str9 performs epoxidation of the 2,3 olefin of prestrobilutin A, followed by Meinwald rearrangement to furnish the aldehyde intermediate. Rapid enolization of the aldehyde intermediate would give the beta-methoxyacrylate skeleton and methylations catalyzed by str2 and str3 complete the synthesis and lead to the production of strobilurin A. The short-chain dehydrogenase stl2 and the dehydrogenase str4 play a role in the shunt pathway leading to the production of bolineol. The cluster encodes no obvious halogenase gene that could be involved in production of strobilurin B, nor any obvious dimethylallyl-transferase that could be involved in the production of strobilurin G. It is possible that unknown proteins encoded in, or near, the cluster (such as str1 or stl1) may form new classes of halogenases or dimethylally-transferases, or that the responsible genes are located elsewhere on the genome. Similarly, proteins encoded by str5/str6 hydrolases appear to have no chemical role in the biosynthesis of strobilurin A. Finally, no obvious self-resistance gene is found within the cluster. This chain is Beta-lactamase-like protein str6, found in Strobilurus tenacellus.